The primary structure comprises 2049 residues: MAARNVSAAHEMHDEKRIAVVGMAVQYAGCKTKDEFWEVLMNGKVESGKISDKRLGSNHRAEHYKAQRSKYADTFCNETYGCLDENEVDNEHELLLSLAKQALAETSVKDSTRCGIVSGCLSFPMDNLQGELLNVYQSHVEKKLGARVFKDASHWSEREQSQKPEAGDRRVFMDPASFVAEELNLGALHYSVDAACATALYVLRLAQDHLVSGAADVMLCGATCLPEPFFILSGFSTFQAMPVGTGQGVSMPLHKDSQGLTPGEGGSIMVLKRLEDAVRDGDHIYGTLLGANLSNAGTGLPLKPLLPAEKACLMDTYKRVNVHPHKVQYVECHATGTPQGDRVEIDAVKACFEGKVPRFGTTKGNFGHTLVAAGFAGMCKVLLAMKHGVIPPTPGIDASTQIDPLVVAGAAIPWPETDGEPKRAGLSAFGFGGTNAHAVFEEHDPSKVACAGRDSVTALSARCGGENNMRIAITGMDATFGALKGLDAFERAIYTGTHGAIPLPEKRWRFLGKDRDFLDLCGVKSTPHGCYIEDVEVDFQRLRTPMTPEDMLLPQQLLAVTTIDRAILDSGMEKGGNVAVFVGLGTDLELYRHRARVALKERLRPEAAARLDPMMQYINDCGTSTSYTSYIGNLVATRVSSQWGFTGPSFTITEGNNSVYRCAELGKYLLETGEVDGVVIAGVDLCGSAENLYVKSRRFKVASGEAPRASFDAAADGYFVGEGCGALVLKRETSCTEKDRIYACVDAIVPGNMPGACLREALDQARVQPGAVEMLELSADSARHLRDASVLPKELTAEEELATLQSVLADASKLPRHVAAGSVKATVGDTGYASGAASLIKAALCVHNRYLPSNGDAFEGPAPEAPWGEALFACQSSRAWLKNPGERRYAAVSGVSETRSCYSVLLSDAEGHHERENRQSLDEEAPKLIVLRADSHEEILARLDKIRERFLQPTGAAPREADLKDQARRLFLELLGETLAQEADAKAGRGPQKRLALSIVSTPAKLQREVELAAKGIPRCLKMRRDWTSPAGSRYAPEPLASDRVAFMYGEGRSPYYGILQDMHRIWPALHEVINEKTTSLWSEGDRWVMPRASSKAELEEQREAFDRNQIEMFRLGILSSMSFTTLARDVLNITPKAAFGLSLGEISMLFSYSDKNGKNSDRLTRDLRASRVWNEALAIEFNALREAWGISKDTPKDEFWQGYIVHGTKQAIEDAIAPDSKYVRLTIINDGNSALISGKPDACKAAIARLGSKVPALPVSQGMCGHCPEVAPYAKEIAEIHQILDIPDTDVNLFSSVSLKRLVPRSTGAKDECAPENVGEYLSELYTRQADFPAIVETVYKQNYDIFVEAGPNNHRSSAVRATLGPQRSHVTGAMDKQNEDAWTTIVKLMATLQAHRVPGATIAPLYHTKLVAEAHACYESFAKGEKPKKNKFVRKIQVNGRFDPKREPISAADLEKLPPADPSIESAIAGRVMTPVAPKFYSRLNIDQQDEARDPILNKDNQPAVAPAATAAPTPKPKPAASSGKPVPSADALRDALLSTDRMLSLGTASASGDLVETAAEDASVIIPPCAVSDLGSRAFMKTYGVNAPMYTGAMAKGIASADLVIAAGKQGMLGSFGAGGLPMHLVREAVDKIQAALPHGPYAVNLIHSPFDSNLEKGNVDLFLEKGVTIVEASAFMTLTPQVVRYRAAGLSRNADGSVRIRNRLIGKVSRTELAGMFMRPAPENLLEKLIASGEITQEQAELARRVPVADDIAVEADSGGHTDNRPIHVILPLIINLRDRVHRECGFPPELRVRVGAGGGIGCPQAALAAFNMGAAFIVTGTVNQLAKQSGTCDNVRKQLSKATYSDVCMAPAADMFEEGVKLQVLKKGTMFPSRANKLYELFCKYDSFESMAPGELERVEKRIFKRPLQEVWDETKDFYINRLHNPEKIQRAEERDPKLKMSLCFRWYLGLASRWANTGASDRVMDYQVWCGPAIGSYNDFVKGTYLDPEVSGEYPCVVQINKQILRGACFLRRLETLRNAPLASSAEALVSQVDDTYVPANKL.

2 Ketosynthase family 3 (KS3) domains span residues Glu15 to Glu442 and Asn468 to Asp908. Active-site for beta-ketoacyl synthase 1 activity residues include Cys196, His333, and His368. A chain length factor (CLF) domain region spans residues Asn467–Asp984. The segment at Arg1044–Asp1377 is acyltransferase (AT) domain. Positions Asn1500–Ser1531 are disordered. Residues Pro1505–Ser1531 show a composition bias toward low complexity. Positions Ser1579–Phe1887 are enoyl reductase (ER) domain.

Component of the polyunsaturated fatty acid synthase complex composed of at least ORF-A, ORF-B and ORF-C.

Its pathway is lipid metabolism; fatty acid biosynthesis. Functionally, poliketide synthase-like protein; part of the polyunsaturated fatty acid synthase composed of the 3 PKS-like subunits A, B and C. While the saturated fatty acids (SFAs) in Thraustochytrium are produced by the conventional fatty acid synthase (FAS) pathway, polyunsaturated fatty acids (PUFAs) including docosahexeanoic acid (DHA) and docosapentaenoic acid (DPA) are synthesized via an anaerobical PKS pathway. PUFA synthase assimilates fatty acyl-CoA, the product of FAS, as the starter unit to synthesize DPA, and this starter unit may be butyryl-CoA, hexanoyl-CoA, or octanoyl-CoA. DPA and DHA biosynthesis seem to differ by the reduction at the N-3 position by PUFA synthase, not the extension of carbon chain. In DHA biosynthesis, PUFA synthase extends the fatty acyl chain from the methyl toward the carboxyl end, and the double bond is formed when the carbon chain is growing, instead of afterward. Therefore, PUFA synthase is unable to transform DPA to DHA, suggesting that DPA is not the precursor of DHA. Moreover, DPA molecule is partly extended by FAS KS domain, so DPA biosynthesis is less dependent on PUFA synthase KS domain than DHA. This chain is Polyunsaturated fatty acid synthase subunit B, found in Thraustochytrium sp. (strain ATCC 26185 / S-3).